The chain runs to 355 residues: Green-sensitive opsin-1 (355 aa).

At 1-49 (MAAHADEPVFAARRYNEETTRESAFVYTNANNTRDPFEGPNYHIAPRWV) the chain is on the extracellular side. N-linked (GlcNAc...) asparagine glycosylation occurs at Asn-31. Residues 50 to 74 (YNLASLWMIIVVIASIFTNSLVIVA) form a helical membrane-spanning segment. Topologically, residues 75–86 (TAKFKKLRHPLN) are cytoplasmic. The helical transmembrane segment at 87–112 (WILVNLAIADLGETVLASTISVFNQV) threads the bilayer. Topologically, residues 113-126 (FGYFVLGHPMCIFE) are extracellular. The cysteines at positions 123 and 200 are disulfide-linked. A helical transmembrane segment spans residues 127–146 (GWTVSVCGITALWSLTIISW). Residues 147 to 165 (ERWVVVCKPFGNVKFDGKW) are Cytoplasmic-facing. A helical membrane pass occupies residues 166–189 (AAGGIIFAWTWAIIWCTPPIFGWS). Residues 190 to 215 (RYWPHGLKTSCGPDVFSGSEDPGVAS) are Extracellular-facing. Residues 216–243 (YMVTLLLTCCILPLSVIIICYIFVWNAI) form a helical membrane-spanning segment. Residues 244–265 (HQVAQQQKDSESTQKAEKEVSR) lie on the Cytoplasmic side of the membrane. The chain crosses the membrane as a helical span at residues 266–289 (MVVVMILAFILCWGPYASFATFSA). At 290–297 (LNPGYAWH) the chain is on the extracellular side. A helical transmembrane segment spans residues 298-322 (PLAAALPAYFAKSATIYNPIIYVFM). Lys-309 carries the post-translational modification N6-(retinylidene)lysine. The Cytoplasmic portion of the chain corresponds to 323–355 (NRQFRSCIMQLFGKKVEDASEVSGSTTEVSTAS).

This sequence belongs to the G-protein coupled receptor 1 family. Opsin subfamily. In terms of tissue distribution, the color pigments are found in the cone photoreceptor cells.

It is found in the membrane. Functionally, visual pigments are the light-absorbing molecules that mediate vision. They consist of an apoprotein, opsin, covalently linked to cis-retinal. In Psalidodon fasciatus (Banded astyanax), this protein is Green-sensitive opsin-1 (G103).